Consider the following 352-residue polypeptide: Gap junction alpha-4 protein (352 aa).

Over G2–K23 the chain is Cytoplasmic. Residues I24 to G46 traverse the membrane as a helical segment. Residues D47 to R76 lie on the Extracellular side of the membrane. The chain crosses the membrane as a helical span at residues Y77–L99. Over S100–T153 the chain is Cytoplasmic. Residues Y154–Y176 form a helical membrane-spanning segment. The Extracellular portion of the chain corresponds to G177–F208. Residues I209–I231 traverse the membrane as a helical segment. Residues C232 to V352 are Cytoplasmic-facing. Residues H332–V352 are disordered. Low complexity predominate over residues T340–V352.

It belongs to the connexin family. Alpha-type (group II) subfamily. In terms of assembly, a connexon is composed of a hexamer of connexins. As to expression, expressed in ovarian somatic cells, heart, leg muscle, liver and eye but not in brain.

Its subcellular location is the cell membrane. The protein resides in the cell junction. It is found in the gap junction. Its function is as follows. One gap junction consists of a cluster of closely packed pairs of transmembrane channels, the connexons, through which materials of low MW diffuse from one cell to a neighboring cell. This Xenopus laevis (African clawed frog) protein is Gap junction alpha-4 protein (gja4).